A 1804-amino-acid polypeptide reads, in one-letter code: Collagen alpha-1(XI) chain (1804 aa).

The signal sequence occupies residues 1–34 (MEPWSRWKTKRWIWDLTISTLVLTFLFQAREVRG). Positions 35–511 (AAPVDILKAL…SKGPTISAQE (477 aa)) are cleaved as a propeptide — N-terminal propeptide. 2 cysteine pairs are disulfide-bonded: C60/C242 and C181/C235. The region spanning 70–242 (DIAYRVTEEA…DYCDHYSPDC (173 aa)) is the Laminin G-like domain. A nonhelical region region spans residues 229 to 417 (KAAYDYCDHY…DFTETSINGH (189 aa)). N-linked (GlcNAc...) asparagine glycosylation is present at N351. Positions 418 to 506 (GAYGEKGQKG…YGGDGSKGPT (89 aa)) are triple-helical region (interrupted). The disordered stretch occupies residues 437-506 (LVEGPPGPAG…YGGDGSKGPT (70 aa)). In terms of domain architecture, Collagen-like 1 spans 440-488 (GPPGPAGPAGLMGPPGLQGPSGLPGDPGDRGPPGRPGLPGADGLPGPPG). Low complexity-rich tracts occupy residues 447 to 465 (PAGL…LPGD) and 477 to 494 (LPGA…LMLP). Residues 507-509 (ISA) form a short nonhelical segment region. Residues 510 to 527 (QEAQAQAILQQARIALRG) form a telopeptide region. The interval 526–1560 (RGPPGPMGLT…KTRRHTESIQ (1035 aa)) is disordered. Residues 528-1540 (PPGPMGLTGR…PGPPGPPGEV (1013 aa)) are triple-helical region. Collagen-like domains follow at residues 530 to 584 (GPMG…GADG), 581 to 639 (GADG…EIGP), 607 to 664 (PGDK…PGQP), and 641 to 698 (GLPG…GPQG). Composition is skewed to gly residues over residues 539-548 (GPVGGPGSAG) and 581-590 (GADGGRGMPG). Position 610 is an allysine (K610). A compositionally biased stretch (low complexity) spans 639-655 (PRGLPGEAGPRGLLGPR). Over residues 697–708 (QGLPGPQGPIGP) the composition is skewed to pro residues. Residues 715-726 (QGKPGLAGLPGA) show a composition bias toward low complexity. Residues 746-804 (GPPGPQGPIGYPGPRGVKGADGVRGLKGSKGEKGEDGFPGFKGDMGLKGDRGEVGQVGP) form the Collagen-like 6 domain. Residues 805–814 (RGEDGPEGPK) show a composition bias toward basic and acidic residues. Low complexity-rich tracts occupy residues 873-901 (KPGP…PGPK), 916-925 (RGPQGPQGPV), and 969-979 (PQGPTGETGPI). Residues 1040 to 1049 (GLKGGEGPQG) are compositionally biased toward gly residues. Residues 1074–1083 (RPGPQGPPGP) are compositionally biased toward pro residues. The segment covering 1084 to 1108 (AGEKGAPGEKGPQGPAGRDGVQGPV) has biased composition (low complexity). Positions 1160-1169 (GIAGGDGEAG) are enriched in gly residues. 2 stretches are compositionally biased toward pro residues: residues 1216-1227 (MGPPGPPGPRGP) and 1341-1360 (QPGP…PGKR). 2 stretches are compositionally biased toward low complexity: residues 1383–1392 (AEGPPGKTGP) and 1417–1426 (QGLPGAAGQD). 3 consecutive Collagen-like domains span residues 1391 to 1449 (GPVG…SKGE), 1442 to 1492 (GDPG…PGPA), and 1481 to 1539 (GAKG…PPGE). Residues 1428 to 1437 (PPGPLGPPGL) are compositionally biased toward pro residues. K1450 carries the post-translational modification Allysine. The segment covering 1453–1462 (PGLIGLIGPP) has biased composition (low complexity). Residues 1481–1490 (GAKGDGGIPG) show a composition bias toward gly residues. The segment covering 1491-1507 (PAGPIGPPGPPGLPGPA) has biased composition (pro residues). The span at 1509-1519 (PKGNKGSSGPT) shows a compositional bias: low complexity. Over residues 1528–1537 (PGPPGPPGPP) the composition is skewed to pro residues. The interval 1541–1561 (IQPLPILSPKKTRRHTESIQA) is nonhelical region (C-terminal). Positions 1562–1804 (DAGDNILDYS…FEVGPACFLG (243 aa)) are cleaved as a propeptide — C-terminal propeptide. The Fibrillar collagen NC1 domain maps to 1575–1803 (EEIFGSLNSL…GFEVGPACFL (229 aa)). The cysteines at positions 1605 and 1637 are disulfide-linked. The Ca(2+) site is built by D1623, N1625, Q1626, C1628, and D1631. Residues N1638 and N1707 are each glycosylated (N-linked (GlcNAc...) asparagine). Intrachain disulfides connect C1646-C1801 and C1712-C1755.

This sequence belongs to the fibrillar collagen family. Trimers composed of three different chains: alpha 1(XI), alpha 2(XI), and alpha 3(XI). Alpha 3(XI) is probably a post-translational modification of alpha 1(II). Post-translationally, prolines at the third position of the tripeptide repeating unit (G-X-Y) are hydroxylated in some or all of the chains. In terms of processing, N-glycosylated.

The protein resides in the secreted. The protein localises to the extracellular space. Its subcellular location is the extracellular matrix. Its function is as follows. May play an important role in fibrillogenesis by controlling lateral growth of collagen II fibrils. This chain is Collagen alpha-1(XI) chain (Col11a1), found in Rattus norvegicus (Rat).